A 23-amino-acid chain; its full sequence is NADH-ubiquinone oxidoreductase 29 kDa subunit (23 aa).

As to quaternary structure, complex I is composed of about 45 different subunits.

It is found in the mitochondrion inner membrane. The catalysed reaction is a ubiquinone + NADH + 5 H(+)(in) = a ubiquinol + NAD(+) + 4 H(+)(out). In terms of biological role, transfer of electrons from NADH to the respiratory chain. The immediate electron acceptor for the enzyme is believed to be ubiquinone. The chain is NADH-ubiquinone oxidoreductase 29 kDa subunit from Solanum tuberosum (Potato).